Consider the following 281-residue polypeptide: Microtubule-associated protein RP/EB family member 3 (281 aa).

The Calponin-homology (CH) domain occupies 14 to 116; that stretch reads NLSRHDMLAW…FIQWFKKFFD (103 aa). Residues 157 to 181 are disordered; the sequence is VPQRTSPTGPKNMQTSGRLSNVAPP. A compositionally biased stretch (polar residues) spans 158–175; it reads PQRTSPTGPKNMQTSGRL. A phosphoserine mark is found at serine 162 and serine 176. In terms of domain architecture, EB1 C-terminal spans 194-264; the sequence is GGHETDAQIL…LYATEEGFAP (71 aa). The tract at residues 217 to 260 is APC-binding; sequence DGLEKERDFYFSKLRDIELICQEHESENSPVISGIIGILYATEE. Positions 217–281 are DCTN1-binding; that stretch reads DGLEKERDFY…EHQQEDQDEY (65 aa). Positions 261 to 281 are disordered; that stretch reads GFAPPEDDEIEEHQQEDQDEY. The span at 272–281 shows a compositional bias: basic and acidic residues; the sequence is EHQQEDQDEY.

This sequence belongs to the MAPRE family. In terms of assembly, homodimer. Heterodimer with MAPRE1. Binds monomeric and polymerized GTP-bound tubulin. Interacts with APC2. Interacts with DCTN1 and SRCIN1. Binds to the C-terminal domain of APC. Interacts (via C-terminus) with CLIP1. Interacts with SLAIN2 and SLAIN1. Interacts with AKAP9. Interacts with PDE4DIP. Interacts with PDE4DIP isoform 13/MMG8/SMYLE; this interaction is required for its recruitment to the Golgi apparatus. In terms of tissue distribution, predominantly expressed in brain and muscle.

The protein resides in the cytoplasm. Its subcellular location is the cytoskeleton. Functionally, plus-end tracking protein (+TIP) that binds to the plus-end of microtubules and regulates the dynamics of the microtubule cytoskeleton. Promotes microtubule growth. May be involved in spindle function by stabilizing microtubules and anchoring them at centrosomes. Also acts as a regulator of minus-end microtubule organization: interacts with the complex formed by AKAP9 and PDE4DIP, leading to recruit CAMSAP2 to the Golgi apparatus, thereby tethering non-centrosomal minus-end microtubules to the Golgi, an important step for polarized cell movement. Promotes elongation of CAMSAP2-decorated microtubule stretches on the minus-end of microtubules. In Homo sapiens (Human), this protein is Microtubule-associated protein RP/EB family member 3 (MAPRE3).